Reading from the N-terminus, the 332-residue chain is Ketol-acid reductoisomerase (NADP(+)) (332 aa).

The KARI N-terminal Rossmann domain maps to 5 to 185 (VKVYYDDEVS…GCTRAGVIET (181 aa)). NADP(+) is bound by residues 28-31 (YGNQ), Arg51, Ser56, and 86-89 (DLVQ). Residue His111 is part of the active site. Gly137 lines the NADP(+) pocket. The KARI C-terminal knotted domain maps to 186 to 331 (TFKDETESDL…RFIRKMSGLE (146 aa)). The Mg(2+) site is built by Asp194, Glu198, Glu230, and Glu234. Position 255 (Ser255) interacts with substrate.

This sequence belongs to the ketol-acid reductoisomerase family. Mg(2+) is required as a cofactor.

The enzyme catalyses (2R)-2,3-dihydroxy-3-methylbutanoate + NADP(+) = (2S)-2-acetolactate + NADPH + H(+). It catalyses the reaction (2R,3R)-2,3-dihydroxy-3-methylpentanoate + NADP(+) = (S)-2-ethyl-2-hydroxy-3-oxobutanoate + NADPH + H(+). Its pathway is amino-acid biosynthesis; L-isoleucine biosynthesis; L-isoleucine from 2-oxobutanoate: step 2/4. The protein operates within amino-acid biosynthesis; L-valine biosynthesis; L-valine from pyruvate: step 2/4. Involved in the biosynthesis of branched-chain amino acids (BCAA). Catalyzes an alkyl-migration followed by a ketol-acid reduction of (S)-2-acetolactate (S2AL) to yield (R)-2,3-dihydroxy-isovalerate. In the isomerase reaction, S2AL is rearranged via a Mg-dependent methyl migration to produce 3-hydroxy-3-methyl-2-ketobutyrate (HMKB). In the reductase reaction, this 2-ketoacid undergoes a metal-dependent reduction by NADPH to yield (R)-2,3-dihydroxy-isovalerate. The sequence is that of Ketol-acid reductoisomerase (NADP(+)) from Pyrococcus abyssi (strain GE5 / Orsay).